A 521-amino-acid chain; its full sequence is UDP-N-acetylmuramate--L-alanine ligase (521 aa).

ATP is bound at residue 136 to 142 (GAHGKTT).

The protein belongs to the MurCDEF family.

The protein resides in the cytoplasm. The catalysed reaction is UDP-N-acetyl-alpha-D-muramate + L-alanine + ATP = UDP-N-acetyl-alpha-D-muramoyl-L-alanine + ADP + phosphate + H(+). The protein operates within cell wall biogenesis; peptidoglycan biosynthesis. Functionally, cell wall formation. This chain is UDP-N-acetylmuramate--L-alanine ligase, found in Bifidobacterium adolescentis (strain ATCC 15703 / DSM 20083 / NCTC 11814 / E194a).